We begin with the raw amino-acid sequence, 469 residues long: tRNA(Ile)-lysidine synthase (469 aa).

26 to 31 (SGGPDS) contacts ATP.

Belongs to the tRNA(Ile)-lysidine synthase family.

The protein localises to the cytoplasm. The catalysed reaction is cytidine(34) in tRNA(Ile2) + L-lysine + ATP = lysidine(34) in tRNA(Ile2) + AMP + diphosphate + H(+). Functionally, ligates lysine onto the cytidine present at position 34 of the AUA codon-specific tRNA(Ile) that contains the anticodon CAU, in an ATP-dependent manner. Cytidine is converted to lysidine, thus changing the amino acid specificity of the tRNA from methionine to isoleucine. This is tRNA(Ile)-lysidine synthase from Clostridium perfringens (strain 13 / Type A).